The chain runs to 156 residues: Glutamine--fructose-6-phosphate aminotransferase [isomerizing] (156 aa).

One can recognise an SIS domain in the interval 4 to 146; the sequence is MAHHIVPARD…VLKGTDVDQP (143 aa). Catalysis depends on lysine 151, which acts as the For Fru-6P isomerization activity.

In terms of assembly, homodimer.

The protein localises to the cytoplasm. It catalyses the reaction D-fructose 6-phosphate + L-glutamine = D-glucosamine 6-phosphate + L-glutamate. Functionally, catalyzes the first step in hexosamine metabolism, converting fructose-6P into glucosamine-6P using glutamine as a nitrogen source. This Sphingobium yanoikuyae (Sphingomonas yanoikuyae) protein is Glutamine--fructose-6-phosphate aminotransferase [isomerizing] (glmS).